Here is a 1232-residue protein sequence, read N- to C-terminus: uncharacterized protein (1232 aa).

The protein belongs to the Mg-chelatase subunit H family.

This is an uncharacterized protein from Methanocaldococcus jannaschii (strain ATCC 43067 / DSM 2661 / JAL-1 / JCM 10045 / NBRC 100440) (Methanococcus jannaschii).